Here is a 1209-residue protein sequence, read N- to C-terminus: MECYYIVISSTHLSNGHFRNIKGVFRGPLSKNGNKTLDYAEKENTIAKALEDLKANFYCELCDKQYYKHQEFDNHINSYDHAHKQRLKELKQREFARNVASKSRKDERKQEKALQRLHKLAELRKETVCAPGSGPMFKSTTVTVRENCNEISQRVVVDSVNNQQDFKYTLIHSEENTKDATTVAEDPESANNYTAKNNQVGDQAQGIHRHKIGFSFAFPKKASVKLESSAAAFSEYSDDASVGKGFSRKSRFVPSACHLQQSSPTDVLLSSEEKTNSFHPPEAMCRDKETVQTQEIKEVSSEKDALLLPSFCKFQLQLSSDADNCQNSVPLADQIPLESVVINEDIPVSGNSFELLGNKSTVLDMSNDCISVQATTEENVKHNEASTTEVENKNGPETLAPSNTEEVNITIHKKTNFCKRQCEPFVPVLNKHRSTVLQWPSEMLVYTTTKPSISYSCNPLCFDFKSTKVNNNLDKNKPDLKDLCSQQKQEDICMGPLSDYKDVSTEGLTDYEIGSSKNKCSQVTPLLADDILSSSCDSGKNENTGQRYKNISCKIRETEKYNFTKSQIKQDTLDEKYNKIRLKETHEYWFHKSRRKKKRKKLCQHHHMEKTKESETRCKMEAENSYTENAGKYLLEPISEKQYLAAEQLLDSHQLLDKRPKSESISLSDNEEMCKTWNTEYNTYDTISSKNHCKKNTILLNGQSNATMIHSGKHNLTYSRTYCCWKTKMSSCSQDHRSLVLQNDMKHMSQNQAVKRGYNSVMNESERFYRKRRQHSHSYSSDESLNRQNHLPEEFLRPPSTSVAPCKPKKKRRRKRGRFHPGFETLELKENTDYPVKDNSSLNPLDRLISEDKKEKMKPQEVAKIERNSEQTNQLRNKLSFHPNNLLPSETNGETEHLEMETTSGELSDVSNDPTTSVCVASAPTKEAIDNTLLEHKERSENINLNEKQIPFQVPNIERNFRQSQPKSYLCHYELAEALPQGKMNETPTEWLRYNSGILNTQPPLPFKEAHVSGHTFVTAEQILAPLALPEQALLIPLENHDKFKNVPCEVYQHILQPNMLANKVKFTFPPAALPPPSTPLQPLPLQQSLCSTSVTTIHHTVLQQHAAAAAAAAAAAAAGTFKVLQPHQQFLSQIPALTRTSLPQLSVGPVGPRLCPGNQPTFVAPPQMPIIPASVLHPSHLAFPSLPHALFPSLLSPHPTVIPLQPLF.

The segment at 57 to 81 (FYCELCDKQYYKHQEFDNHINSYDH) adopts a C2H2-type zinc-finger fold. The span at 380 to 394 (VKHNEASTTEVENKN) shows a compositional bias: basic and acidic residues. Disordered regions lie at residues 380 to 401 (VKHN…TLAP) and 792 to 860 (PEEF…MKPQ). The span at 807–819 (KPKKKRRRKRGRF) shows a compositional bias: basic residues. Basic and acidic residues-rich tracts occupy residues 826 to 836 (LELKENTDYPV) and 848 to 860 (LISE…MKPQ).

This Homo sapiens (Human) protein is Zinc finger protein 804A (ZNF804A).